Reading from the N-terminus, the 245-residue chain is Probable phosphatase YpAngola_A2446 (245 aa).

Residues His-7, His-9, His-15, His-40, Glu-73, His-101, His-131, Asp-192, and His-194 each contribute to the Zn(2+) site.

This sequence belongs to the PHP family. Homotrimer. It depends on Zn(2+) as a cofactor.

The chain is Probable phosphatase YpAngola_A2446 from Yersinia pestis bv. Antiqua (strain Angola).